Here is a 228-residue protein sequence, read N- to C-terminus: Orotate phosphoribosyltransferase (228 aa).

Lys-26 contacts 5-phospho-alpha-D-ribose 1-diphosphate. Phe-34 to Phe-35 lines the orotate pocket. Residues Tyr-72–Lys-73, Arg-98, Lys-99, Lys-102, His-104, and Asp-123–Ser-131 contribute to the 5-phospho-alpha-D-ribose 1-diphosphate site. Residues Ser-127 and Arg-155 each contribute to the orotate site.

This sequence belongs to the purine/pyrimidine phosphoribosyltransferase family. PyrE subfamily. Homodimer. It depends on Mg(2+) as a cofactor.

The enzyme catalyses orotidine 5'-phosphate + diphosphate = orotate + 5-phospho-alpha-D-ribose 1-diphosphate. It functions in the pathway pyrimidine metabolism; UMP biosynthesis via de novo pathway; UMP from orotate: step 1/2. In terms of biological role, catalyzes the transfer of a ribosyl phosphate group from 5-phosphoribose 1-diphosphate to orotate, leading to the formation of orotidine monophosphate (OMP). This Nitrosospira multiformis (strain ATCC 25196 / NCIMB 11849 / C 71) protein is Orotate phosphoribosyltransferase.